A 394-amino-acid polypeptide reads, in one-letter code: Cysteine protease ATG4B (394 aa).

Cys74 functions as the Nucleophile in the catalytic mechanism. Active-site residues include Asp280 and His282. The LIR motif lies at 389–392; the sequence is FEIL.

Belongs to the peptidase C54 family.

It is found in the cytoplasm. Its subcellular location is the cytosol. The protein localises to the cytoplasmic vesicle. It localises to the autophagosome. The protein resides in the endoplasmic reticulum. It is found in the mitochondrion. It catalyses the reaction [protein]-C-terminal L-amino acid-glycyl-phosphatidylethanolamide + H2O = [protein]-C-terminal L-amino acid-glycine + a 1,2-diacyl-sn-glycero-3-phosphoethanolamine. It carries out the reaction [protein]-C-terminal L-amino acid-glycyl-phosphatidylserine + H2O = [protein]-C-terminal L-amino acid-glycine + a 1,2-diacyl-sn-glycero-3-phospho-L-serine. In terms of biological role, cysteine protease that plays a key role in autophagy by mediating both proteolytic activation and delipidation of ATG8 family proteins. Required for canonical autophagy (macroautophagy), non-canonical autophagy as well as for mitophagy. The protease activity is required for proteolytic activation of ATG8 family proteins: cleaves the C-terminal amino acid of ATG8 proteins to reveal a C-terminal glycine. Exposure of the glycine at the C-terminus is essential for ATG8 proteins conjugation to phosphatidylethanolamine (PE) and insertion to membranes, which is necessary for autophagy. Protease activity is also required to counteract formation of high-molecular weight conjugates of ATG8 proteins (ATG8ylation): acts as a deubiquitinating-like enzyme that removes ATG8 conjugated to other proteins, such as ATG3. In addition to the protease activity, also mediates delipidation of ATG8 family proteins. Catalyzes delipidation of PE-conjugated forms of ATG8 proteins during macroautophagy. Also involved in non-canonical autophagy, a parallel pathway involving conjugation of ATG8 proteins to single membranes at endolysosomal compartments, by catalyzing delipidation of ATG8 proteins conjugated to phosphatidylserine (PS). This is Cysteine protease ATG4B from Danio rerio (Zebrafish).